The sequence spans 453 residues: 4,4'-diapolycopene-4,4'-dial dehydrogenase (453 aa).

The segment covering 1 to 20 has biased composition (basic and acidic residues); it reads MPDNDSHSLKSLPERQREDL. Positions 1-23 are disordered; it reads MPDNDSHSLKSLPERQREDLFSA. Catalysis depends on residues Glu-215 and Cys-249.

Belongs to the aldehyde dehydrogenase family.

The catalysed reaction is all-trans-4,4'-diapolycopene-4,4'-dial + 2 A + 2 H2O = all-trans-4,4'-diapolycopene-4,4'-dioate + 2 AH2 + 2 H(+). It participates in carotenoid biosynthesis. In terms of biological role, involved in the biosynthesis of the major C30 carotenoid 4,4'-diapolycopene-4,4'-dioic acid, which protects B.firmus from peroxidative reactions. Catalyzes the oxidation of 4,4'-diapolycopene-4,4'-dial to yield 4,4'-diapolycopene-4,4'-dioic aci. The sequence is that of 4,4'-diapolycopene-4,4'-dial dehydrogenase from Cytobacillus firmus (Bacillus firmus).